Here is a 246-residue protein sequence, read N- to C-terminus: Ribonuclease PH (246 aa).

Phosphate contacts are provided by residues R95 and 133 to 135; that span reads GTR.

It belongs to the RNase PH family. Homohexameric ring arranged as a trimer of dimers.

It carries out the reaction tRNA(n+1) + phosphate = tRNA(n) + a ribonucleoside 5'-diphosphate. In terms of biological role, phosphorolytic 3'-5' exoribonuclease that plays an important role in tRNA 3'-end maturation. Removes nucleotide residues following the 3'-CCA terminus of tRNAs; can also add nucleotides to the ends of RNA molecules by using nucleoside diphosphates as substrates, but this may not be physiologically important. Probably plays a role in initiation of 16S rRNA degradation (leading to ribosome degradation) during starvation. This chain is Ribonuclease PH, found in Bordetella bronchiseptica (strain ATCC BAA-588 / NCTC 13252 / RB50) (Alcaligenes bronchisepticus).